The sequence spans 393 residues: 5-amino-6-(D-ribitylamino)uracil--L-tyrosine 4-hydroxyphenyl transferase (393 aa).

The region spanning 71–318 (VTYVINRNIN…TAVSRIFLGN (248 aa)) is the Radical SAM core domain. [4Fe-4S] cluster contacts are provided by Cys85, Cys89, and Cys92.

Belongs to the radical SAM superfamily. CofH family. In terms of assembly, consists of two subunits, CofG and CofH. [4Fe-4S] cluster serves as cofactor.

The enzyme catalyses 5-amino-6-(D-ribitylamino)uracil + L-tyrosine + S-adenosyl-L-methionine = 5-amino-5-(4-hydroxybenzyl)-6-(D-ribitylimino)-5,6-dihydrouracil + 2-iminoacetate + 5'-deoxyadenosine + L-methionine + H(+). Its pathway is cofactor biosynthesis; coenzyme F0 biosynthesis. Catalyzes the radical-mediated synthesis of 5-amino-5-(4-hydroxybenzyl)-6-(D-ribitylimino)-5,6-dihydrouracil from 5-amino-6-(D-ribitylamino)uracil and L-tyrosine. This is 5-amino-6-(D-ribitylamino)uracil--L-tyrosine 4-hydroxyphenyl transferase from Trichodesmium erythraeum (strain IMS101).